The chain runs to 421 residues: Putative B3 domain-containing protein Os08g0333500 (421 aa).

Positions methionine 1–lysine 51 form a DNA-binding region, TF-B3. Positions serine 92–threonine 121 are disordered. Residues serine 95–serine 107 show a composition bias toward basic and acidic residues. Positions methionine 108 to threonine 121 are enriched in polar residues.

The protein resides in the nucleus. This Oryza sativa subsp. japonica (Rice) protein is Putative B3 domain-containing protein Os08g0333500.